The sequence spans 777 residues: DNA repair helicase/translocase XPB-R (777 aa).

The Helicase ATP-binding domain occupies 212–416 (AASDGALRSG…DLFHLVGPKL (205 aa)). An ATP-binding site is contributed by 225–232 (LPCGSGKT). The DEVH box motif lies at 369–372 (DEVH). The 148-residue stretch at 484-631 (IVKRHVAESS…GYTCSVTEFN (148 aa)) folds into the Helicase C-terminal domain.

Belongs to the helicase family. RAD25/XPB subfamily.

The enzyme catalyses Couples ATP hydrolysis with the unwinding of duplex DNA by translocating in the 3'-5' direction.. The catalysed reaction is ATP + H2O = ADP + phosphate + H(+). In terms of biological role, ATP-dependent 3'-5' DNA helicase/translocase; binds dsDNA rather than ssDNA, unzipping it in a translocase rather than classical helicase activity. Involved in nucleotide excision repair (NER) of damaged DNA. XPB-R is a paralog of XBP, but is not a component of the TFIIH basal transcription factor and is dispensable for RNA polymerase II transcription. The polypeptide is DNA repair helicase/translocase XPB-R (Trypanosoma brucei brucei (strain 927/4 GUTat10.1)).